Reading from the N-terminus, the 533-residue chain is CTP synthase (533 aa).

Positions 1 to 270 (MVHLAKYIVV…GDYIVRRIEL (270 aa)) are amidoligase domain. Serine 16 contributes to the CTP binding site. Residue serine 16 coordinates UTP. 17–22 (SIGKGI) serves as a coordination point for ATP. L-glutamine is bound at residue tyrosine 57. Aspartate 74 is a binding site for ATP. The Mg(2+) site is built by aspartate 74 and glutamate 144. Residues 151 to 153 (DIE), 191 to 196 (KTKPTQ), and lysine 227 contribute to the CTP site. UTP is bound by residues 191-196 (KTKPTQ) and lysine 227. A Glutamine amidotransferase type-1 domain is found at 303-533 (YVELEDSYIS…FLRAALERSR (231 aa)). Glycine 355 is a binding site for L-glutamine. Cysteine 382 serves as the catalytic Nucleophile; for glutamine hydrolysis. L-glutamine-binding positions include 383–386 (LGMQ), glutamate 405, and arginine 462. Catalysis depends on residues histidine 507 and glutamate 509.

This sequence belongs to the CTP synthase family. Homotetramer.

It carries out the reaction UTP + L-glutamine + ATP + H2O = CTP + L-glutamate + ADP + phosphate + 2 H(+). It catalyses the reaction L-glutamine + H2O = L-glutamate + NH4(+). The enzyme catalyses UTP + NH4(+) + ATP = CTP + ADP + phosphate + 2 H(+). It participates in pyrimidine metabolism; CTP biosynthesis via de novo pathway; CTP from UDP: step 2/2. With respect to regulation, allosterically activated by GTP, when glutamine is the substrate; GTP has no effect on the reaction when ammonia is the substrate. The allosteric effector GTP functions by stabilizing the protein conformation that binds the tetrahedral intermediate(s) formed during glutamine hydrolysis. Inhibited by the product CTP, via allosteric rather than competitive inhibition. In terms of biological role, catalyzes the ATP-dependent amination of UTP to CTP with either L-glutamine or ammonia as the source of nitrogen. Regulates intracellular CTP levels through interactions with the four ribonucleotide triphosphates. The sequence is that of CTP synthase from Methanothermobacter thermautotrophicus (strain ATCC 29096 / DSM 1053 / JCM 10044 / NBRC 100330 / Delta H) (Methanobacterium thermoautotrophicum).